Here is a 323-residue protein sequence, read N- to C-terminus: Calcium homeostasis modulator protein 2 (323 aa).

At 1–21 (MAALIAENFRFLSLFFKSKDV) the chain is on the cytoplasmic side. The central pore stretch occupies residues 14 to 39 (LFFKSKDVMIFNGLVALGTVGSQELF). A helical transmembrane segment spans residues 22–43 (MIFNGLVALGTVGSQELFTVVA). The Extracellular portion of the chain corresponds to 44 to 52 (FHCPCSPAR). Disulfide bonds link C46-C130 and C48-C162. The chain crosses the membrane as a helical span at residues 53–76 (NYLYGLAAIGVPALALFLIGVILN). Residues 77 to 101 (NHTWNLVAECQYRRTKNCSAAPNFL) are Cytoplasmic-facing. The helical transmembrane segment at 102-132 (LLSSIVGRAAVAPVTWSVISLLRGEAYVCAL) threads the bilayer. The Extracellular segment spans residues 133 to 179 (SEFVNPHSLMVGERSFPVAHATEILARFPCGEGPANLSVFREEVSRR). The interval 145–152 (ERSFPVAH) is hemichannel docking. Residues 180-206 (LKYESQLFGWLLIGVVAILVFLTKCLK) traverse the membrane as a helical segment. At 207-323 (HYCSPLSYRQ…DHVEMSLLPS (117 aa)) the chain is on the cytoplasmic side. The tract at residues 214 to 251 (YRQEAYWAQYRANEDQLFQRTAEVHSRVLAANNVRRFF) is intersubunit interaction.

It belongs to the CALHM family. As to quaternary structure, homo-undecamer. Two undecameric hemichannels can assemble in a head-to-head manner to form a gap junction.

The protein resides in the cell membrane. It catalyses the reaction ATP(in) = ATP(out). Functionally, pore-forming subunit of Ca(2+) homeostasis modulator channels. Mediates ATP release from astrocytes and ATP-induced Ca(2+) influx in microglia thus regulating neuronal ATP and Ca(2+) homeostasis, synaptic transmission and neuroinflammatory response. May form intercellular gap junctions. The gating mechanism remains unknown. This Bos taurus (Bovine) protein is Calcium homeostasis modulator protein 2 (CALHM2).